The sequence spans 272 residues: MSGFEQLFPGQLPRLVMFDLDGTLIDSVPDLAAAVDNMLLSLGRKPAGIESVREWVGNGAPVLVRRALAGGIDHSSVDDVEAEHALEVFMEAYGASHELTVVYPGVRDTLKWLHKQGVAMALITNKPERFVAPLLDQMKIGRYFKWIIGGDTLPQKKPDPAALFFVMKMSGIPASQSLFVGDSRSDVLAAKAAGVKCVGLSYGYNHGRPIAEESPTLVIDDLRKLIPGCLDTAAEITLPDAAQSPSGNAIVVVTRKLWMKVIKALARWRWRA.

Residue D19 is the Nucleophile of the active site. Mg(2+) is bound by residues D19, D21, and D182.

This sequence belongs to the HAD-like hydrolase superfamily. CbbY/CbbZ/Gph/YieH family. Mg(2+) serves as cofactor.

It catalyses the reaction 2-phosphoglycolate + H2O = glycolate + phosphate. Its pathway is organic acid metabolism; glycolate biosynthesis; glycolate from 2-phosphoglycolate: step 1/1. Functionally, specifically catalyzes the dephosphorylation of 2-phosphoglycolate. Is involved in the dissimilation of the intracellular 2-phosphoglycolate formed during the DNA repair of 3'-phosphoglycolate ends, a major class of DNA lesions induced by oxidative stress. In Pseudomonas fluorescens (strain Pf0-1), this protein is Phosphoglycolate phosphatase.